The sequence spans 296 residues: Ribosomal RNA small subunit methyltransferase A (296 aa).

6 residues coordinate S-adenosyl-L-methionine: Asn31, Leu33, Gly58, Glu79, Asp104, and Asn129.

It belongs to the class I-like SAM-binding methyltransferase superfamily. rRNA adenine N(6)-methyltransferase family. RsmA subfamily.

The protein resides in the cytoplasm. The enzyme catalyses adenosine(1518)/adenosine(1519) in 16S rRNA + 4 S-adenosyl-L-methionine = N(6)-dimethyladenosine(1518)/N(6)-dimethyladenosine(1519) in 16S rRNA + 4 S-adenosyl-L-homocysteine + 4 H(+). Specifically dimethylates two adjacent adenosines (A1518 and A1519) in the loop of a conserved hairpin near the 3'-end of 16S rRNA in the 30S particle. May play a critical role in biogenesis of 30S subunits. In Shouchella clausii (strain KSM-K16) (Alkalihalobacillus clausii), this protein is Ribosomal RNA small subunit methyltransferase A.